Here is a 1196-residue protein sequence, read N- to C-terminus: DNA-directed RNA polymerase subunit beta (1196 aa).

Over residues 1152-1165 the composition is skewed to acidic residues; sequence EEEIEMRDLEDEED. The segment at 1152 to 1196 is disordered; sequence EEEIEMRDLEDEEDAKQADGLALSGDEAPEETASPDVERDAVTKE. Residues 1187–1196 show a composition bias toward basic and acidic residues; sequence DVERDAVTKE.

Belongs to the RNA polymerase beta chain family. As to quaternary structure, the RNAP catalytic core consists of 2 alpha, 1 beta, 1 beta' and 1 omega subunit. When a sigma factor is associated with the core the holoenzyme is formed, which can initiate transcription.

The enzyme catalyses RNA(n) + a ribonucleoside 5'-triphosphate = RNA(n+1) + diphosphate. Its function is as follows. DNA-dependent RNA polymerase catalyzes the transcription of DNA into RNA using the four ribonucleoside triphosphates as substrates. This Bacillus velezensis (strain DSM 23117 / BGSC 10A6 / LMG 26770 / FZB42) (Bacillus amyloliquefaciens subsp. plantarum) protein is DNA-directed RNA polymerase subunit beta.